A 194-amino-acid polypeptide reads, in one-letter code: Thioredoxin peroxidase (194 aa).

The Thioredoxin domain occupies 2–160 (LQPNMPAPNF…ALRLLDAFIF (159 aa)). C47 functions as the Cysteine sulfenic acid (-SOH) intermediate in the catalytic mechanism.

It belongs to the peroxiredoxin family. AhpC/Prx1 subfamily. In terms of assembly, homodimer; disulfide-linked, upon oxidation.

The catalysed reaction is a hydroperoxide + [thioredoxin]-dithiol = an alcohol + [thioredoxin]-disulfide + H2O. Antioxidant. Could be involved in protection against reactive oxygen species (ROS) generated by metabolic processes and/or protection of the parasite against ROS released by immune effector cells. Its function is as follows. Thiol-specific peroxidase that catalyzes the reduction of hydrogen peroxide and organic hydroperoxides to water and alcohols, respectively. Plays a role in cell protection against oxidative stress by detoxifying peroxides and as sensor of hydrogen peroxide-mediated signaling events. This Fasciola hepatica (Liver fluke) protein is Thioredoxin peroxidase.